We begin with the raw amino-acid sequence, 364 residues long: Homeobox protein KNOX3 (364 aa).

The disordered stretch occupies residues 13 to 49; it reads TAHGQHHSQLPWGSSPLSAVISPPPQQQQQHQQQSAG. Residues 19-29 show a composition bias toward polar residues; the sequence is HSQLPWGSSPL. Residues 246–266 form the ELK domain; it reads ELKHHLLKKYSGYLSSLKQEL. Residues 267 to 330 constitute a DNA-binding region (homeobox; TALE-type); that stretch reads SKKKKKGKLP…NQRKRHWKPT (64 aa).

This sequence belongs to the TALE/KNOX homeobox family. In terms of assembly, binds DNA as a monomer. In terms of tissue distribution, the unit of inflorescence is the spikelet, which bears a fertile tract, the lemma, and the floret consisting of palea, two lodicules, three stamens and the pistil. The lemma is completed by the awn, an appendage homologous to the laminae of normal leaves. Expressed in the inflorescences and lemmas and at lower levels, in palea and vascular bundles.

Its subcellular location is the nucleus. May play a role in meristem formation and/or maintenance. Overexpression causes the hooded phenotype characterized by the appearance of an extra flower of inverse polarity on the lemma. Binds to the DNA sequence 5'-TGAC-3'. The polypeptide is Homeobox protein KNOX3 (KNOX3) (Hordeum vulgare (Barley)).